We begin with the raw amino-acid sequence, 67 residues long: Large ribosomal subunit protein uL29 (67 aa).

It belongs to the universal ribosomal protein uL29 family.

This Methanosarcina barkeri (strain Fusaro / DSM 804) protein is Large ribosomal subunit protein uL29.